The following is a 366-amino-acid chain: Ribosomal RNA large subunit methyltransferase M (366 aa).

S-adenosyl-L-methionine contacts are provided by residues Ser188, 221 to 224 (CPGG), Asp240, Asp260, and Asp277. The active-site Proton acceptor is Lys306.

Belongs to the class I-like SAM-binding methyltransferase superfamily. RNA methyltransferase RlmE family. RlmM subfamily. In terms of assembly, monomer.

It is found in the cytoplasm. It carries out the reaction cytidine(2498) in 23S rRNA + S-adenosyl-L-methionine = 2'-O-methylcytidine(2498) in 23S rRNA + S-adenosyl-L-homocysteine + H(+). Catalyzes the 2'-O-methylation at nucleotide C2498 in 23S rRNA. The polypeptide is Ribosomal RNA large subunit methyltransferase M (Shigella dysenteriae serotype 1 (strain Sd197)).